A 127-amino-acid polypeptide reads, in one-letter code: MSNRKPYVREMTRTWWKDHPFYRFYMVREATVLPLIFFTICLLVGLGSLVKGPLAWASWLDFMANPIVVALNIVALAGSLFHAQTFFSMMPQVMPIRLGGKTLDKKVVVLAQWAAVAAITLLVLVIV.

Transmembrane regions (helical) follow at residues 30–50, 67–87, and 107–127; these read ATVL…GSLV, IVVA…QTFF, and VVVL…LVIV.

Belongs to the FrdC family. Part of an enzyme complex containing four subunits: a flavoprotein (FrdA), an iron-sulfur protein (FrdB), and two hydrophobic anchor proteins (FrdC and FrdD).

It is found in the cell inner membrane. Functionally, anchors the catalytic components of the fumarate reductase complex to the cell membrane, binds quinones. The sequence is that of Fumarate reductase subunit C from Aliivibrio fischeri (strain ATCC 700601 / ES114) (Vibrio fischeri).